We begin with the raw amino-acid sequence, 242 residues long: High mobility group protein homolog (242 aa).

2 DNA-binding regions (HMG box) span residues 54–122 (PKRN…EANK) and 126–197 (KPVK…IDKE).

It localises to the host nucleus. In Acheta domesticus (House cricket), this protein is High mobility group protein homolog (EF1).